The sequence spans 229 residues: Sperm flagellar protein 1 (229 aa).

A Calponin-homology (CH) domain is found at 7–115 (EETMQELYTW…TLRQKIEEKQ (109 aa)). Residues 122 to 169 (ADLSQDQATQNNGNTHSDKGYKSNGTELSPRQGARVDPASKTHQGYAQ) form a disordered region. Residues 123-136 (DLSQDQATQNNGNT) show a composition bias toward polar residues. The essential for homodimerization and microtubule bundling activity stretch occupies residues 178–229 (RFQLAEKEQTLILSQETIQILQAKLRRLEQLLLLKNVRIDDLTRRLQELEKK).

As to quaternary structure, homodimer.

Its subcellular location is the cytoplasm. It is found in the cytoskeleton. It localises to the cilium axoneme. The protein resides in the apical cell membrane. Functionally, microtubule-associated protein involved in the stabilization of microtubules along the axis of migration during radial intercalation. Promotes the establishment and stabilization of an axis of microtubules required for the active migration of cells into the outer epithelium. Microtubule-associated protein that promotes microtubule bundling and stabilizes microtubules against depolymerization in response to cold shock. Essential for ciliary central apparatus formation which requires both its microtubule-binding and bundling activities. Regulates planar cell polarity signaling pathway and asymmetric microtubule accumulation in ciliated epithelia. This Xenopus laevis (African clawed frog) protein is Sperm flagellar protein 1.